The primary structure comprises 223 residues: Probable transaldolase (223 aa).

Lysine 86 (schiff-base intermediate with substrate) is an active-site residue.

Belongs to the transaldolase family. Type 3B subfamily.

It localises to the cytoplasm. The catalysed reaction is D-sedoheptulose 7-phosphate + D-glyceraldehyde 3-phosphate = D-erythrose 4-phosphate + beta-D-fructose 6-phosphate. It participates in carbohydrate degradation; pentose phosphate pathway; D-glyceraldehyde 3-phosphate and beta-D-fructose 6-phosphate from D-ribose 5-phosphate and D-xylulose 5-phosphate (non-oxidative stage): step 2/3. Functionally, transaldolase is important for the balance of metabolites in the pentose-phosphate pathway. In Thermoplasma volcanium (strain ATCC 51530 / DSM 4299 / JCM 9571 / NBRC 15438 / GSS1), this protein is Probable transaldolase (tal).